The chain runs to 417 residues: CinA-like protein (417 aa).

This sequence belongs to the CinA family.

The chain is CinA-like protein from Microcystis aeruginosa (strain NIES-843 / IAM M-2473).